Here is a 118-residue protein sequence, read N- to C-terminus: Ribosome-binding factor A (118 aa).

It belongs to the RbfA family. As to quaternary structure, monomer. Binds 30S ribosomal subunits, but not 50S ribosomal subunits or 70S ribosomes.

It localises to the cytoplasm. One of several proteins that assist in the late maturation steps of the functional core of the 30S ribosomal subunit. Associates with free 30S ribosomal subunits (but not with 30S subunits that are part of 70S ribosomes or polysomes). Required for efficient processing of 16S rRNA. May interact with the 5'-terminal helix region of 16S rRNA. This chain is Ribosome-binding factor A, found in Clostridium beijerinckii (strain ATCC 51743 / NCIMB 8052) (Clostridium acetobutylicum).